Here is a 30-residue protein sequence, read N- to C-terminus: Sillucin (30 aa).

Intrachain disulfides connect C2/C7, C12/C24, C13/C30, and C14/C21.

It localises to the secreted. In terms of biological role, sillucin is an antimicrobial agent produced by the thermophilic fungus Rhizomucor pusillus in liquid culture; it is effective against Gram-positive bacteria at the level of RNA metabolism. The polypeptide is Sillucin (Rhizomucor pusillus).